Here is an 843-residue protein sequence, read N- to C-terminus: Adenylate cyclase (843 aa).

The tract at residues 1 to 542 is catalytic; that stretch reads MECNLAQAKQ…NLRQSFPSTI (542 aa). The interval 549–843 is regulatory; that stretch reads SDLLNQCEIR…VPFKFRQMNK (295 aa).

Belongs to the adenylyl cyclase class-1 family.

It is found in the cytoplasm. It catalyses the reaction ATP = 3',5'-cyclic AMP + diphosphate. In terms of biological role, plays an essential role in competence development. The protein is Adenylate cyclase (cyaA) of Haemophilus influenzae (strain ATCC 51907 / DSM 11121 / KW20 / Rd).